The primary structure comprises 257 residues: Acetylglutamate kinase (257 aa).

Substrate-binding positions include 43–44 (GG), Arg-65, and Asn-157. Residues 180 to 185 (DISSIL) and 208 to 210 (IIT) each bind ATP.

Belongs to the acetylglutamate kinase family. ArgB subfamily. Homodimer.

It is found in the cytoplasm. The enzyme catalyses N-acetyl-L-glutamate + ATP = N-acetyl-L-glutamyl 5-phosphate + ADP. The protein operates within amino-acid biosynthesis; L-arginine biosynthesis; N(2)-acetyl-L-ornithine from L-glutamate: step 2/4. Catalyzes the ATP-dependent phosphorylation of N-acetyl-L-glutamate. This chain is Acetylglutamate kinase, found in Buchnera aphidicola subsp. Acyrthosiphon pisum (strain 5A).